The primary structure comprises 101 residues: Small ribosomal subunit protein uS14 (101 aa).

It belongs to the universal ribosomal protein uS14 family. In terms of assembly, part of the 30S ribosomal subunit. Contacts proteins S3 and S10.

Its function is as follows. Binds 16S rRNA, required for the assembly of 30S particles and may also be responsible for determining the conformation of the 16S rRNA at the A site. This chain is Small ribosomal subunit protein uS14, found in Ectopseudomonas mendocina (strain ymp) (Pseudomonas mendocina).